The following is a 336-amino-acid chain: F420-dependent glucose-6-phosphate dehydrogenase (336 aa).

Aspartate 39 contributes to the coenzyme F420-(gamma-Glu)n binding site. Histidine 40 serves as the catalytic Proton donor. Coenzyme F420-(gamma-Glu)n-binding positions include threonine 76 and threonine 107–glycine 108. Residue glutamate 109 is the Proton acceptor of the active site. Residues asparagine 112, glycine 177–glycine 178, and leucine 180–valine 181 each bind coenzyme F420-(gamma-Glu)n. Substrate contacts are provided by threonine 195, lysine 198, lysine 259, and arginine 283.

Belongs to the F420-dependent glucose-6-phosphate dehydrogenase family. Homodimer.

It catalyses the reaction oxidized coenzyme F420-(gamma-L-Glu)(n) + D-glucose 6-phosphate + H(+) = 6-phospho-D-glucono-1,5-lactone + reduced coenzyme F420-(gamma-L-Glu)(n). Its function is as follows. Catalyzes the coenzyme F420-dependent oxidation of glucose 6-phosphate (G6P) to 6-phosphogluconolactone. In Nocardia farcinica (strain IFM 10152), this protein is F420-dependent glucose-6-phosphate dehydrogenase.